Consider the following 506-residue polypeptide: MEFYYFLYLAFLLFCFILSKTTKKFGQNSQYSNHDELPPGPPQIPILGNAHQLSGGHTHHILRDLAKKYGPLMHLKIGEVSTIVASSPQIAEEIFRTHDILFADRPSNLESFKIVSYDFSDMVVSPYGNYWRQLRKISMMELLSQKSVQSFRSIREEEVLNFIKSIGSKEGTRINLSKEISLLIYGITTRAAFGEKNKNTEEFIRLLDQLTKAVAEPNIADMFPSLKFLQLISTSKYKIEKIHKQFDVIVETILKGHKEKINKPLSQENGEKKEDLVDVLLNIQRRNDFEAPLGDKNIKAIIFNIFSAGTETSSTTVDWAMCEMIKNPTVMKKAQEEVRKVFNEEGNVDETKLHQLKYLQAVIKETLRLHPPVPLLLPRECREQCKIKGYTIPSKSRVIVNAWAIGRDPNYWIEPEKFNPDRFLESKVDFKGNSFEYLPFGGGRRICPGITFALANIELPLAQLLFHFDWQSNTEKLNMKESRGVTVRREDDLYLTPVNFSSSSPA.

Residues 1–21 (MEFYYFLYLAFLLFCFILSKT) traverse the membrane as a helical segment. Cys447 serves as a coordination point for heme.

The protein belongs to the cytochrome P450 family. Heme serves as cofactor. In terms of tissue distribution, predominantly expressed in young leaves of mature plants. Low expression in roots and flowers, but not detected in stems and old leaves. Found predominantly in leaf epidermis. Barely detected in roots, internodes, young and mature leaves, and flower buds, but relatively abundant in fully developed flowers. Not detected in leaf epidermal cells.

It is found in the endoplasmic reticulum membrane. It catalyses the reaction (-)-tabersonine + reduced [NADPH--hemoprotein reductase] + O2 = 16-hydroxytabersonine + oxidized [NADPH--hemoprotein reductase] + H2O + H(+). It functions in the pathway alkaloid biosynthesis; vindoline biosynthesis. Involved in the flower biosynthesis of vindoline, a precursor of vinblastine and vincristine. Hydroxylates specifically tabersonine, 2,3-dihydrotabersonine and 2,3-dihydro-3-hydroxytabersonine, but has no activity with naringenin, tryptamine, secologanin, strictosidine, ajmalicine, vindoline and catharanthine. This Catharanthus roseus (Madagascar periwinkle) protein is Tabersonine 16-hydroxylase 1.